Here is a 397-residue protein sequence, read N- to C-terminus: Acetate kinase (397 aa).

A Mg(2+)-binding site is contributed by Asn-7. Lys-14 lines the ATP pocket. A substrate-binding site is contributed by Arg-91. Catalysis depends on Asp-148, which acts as the Proton donor/acceptor. Residues 208 to 212, 283 to 285, and 331 to 335 contribute to the ATP site; these read HLGNG, DLR, and GVGEN. Glu-384 is a binding site for Mg(2+).

The protein belongs to the acetokinase family. Homodimer. The cofactor is Mg(2+). Mn(2+) is required as a cofactor.

The protein resides in the cytoplasm. It carries out the reaction acetate + ATP = acetyl phosphate + ADP. The protein operates within metabolic intermediate biosynthesis; acetyl-CoA biosynthesis; acetyl-CoA from acetate: step 1/2. Functionally, catalyzes the formation of acetyl phosphate from acetate and ATP. Can also catalyze the reverse reaction. The protein is Acetate kinase of Syntrophomonas wolfei subsp. wolfei (strain DSM 2245B / Goettingen).